A 655-amino-acid chain; its full sequence is p-hydroxybenzoic acid efflux pump subunit AaeB (655 aa).

The next 11 helical transmembrane spans lie at 13 to 33, 38 to 58, 69 to 89, 93 to 113, 121 to 141, 152 to 172, 370 to 390, 407 to 427, 431 to 451, 459 to 479, and 482 to 502; these read FAVK…HFQL, WAVL…GGEP, LRII…IAMI, LLMI…SSLV, WGLA…EPLL, EIVI…PRSI, LFWL…IAVV, FIYG…VIIP, QSML…GIEV, MGAL…TFHF, and FLDS…VILL.

The protein belongs to the aromatic acid exporter ArAE (TC 2.A.85) family.

The protein resides in the cell inner membrane. In terms of biological role, forms an efflux pump with AaeA. Could function as a metabolic relief valve, allowing to eliminate certain compounds when they accumulate to high levels in the cell. This Shigella sonnei (strain Ss046) protein is p-hydroxybenzoic acid efflux pump subunit AaeB.